The following is a 156-amino-acid chain: Snaclec jerdonibitin subunit alpha (156 aa).

The first 23 residues, 1-23 (MGRFIFVSFGLLVVFLSLSGTGA), serve as a signal peptide directing secretion. 3 disulfides stabilise this stretch: cysteine 25–cysteine 36, cysteine 53–cysteine 150, and cysteine 125–cysteine 142. A C-type lectin domain is found at 32–151 (FRQYCYRVFK…CGQQHLFMCK (120 aa)).

It belongs to the snaclec family. As to quaternary structure, heterodimer of subunits alpha and beta; disulfide-linked. As to expression, expressed by the venom gland.

The protein resides in the secreted. Its function is as follows. Snaclec that dose-dependently inhibits platelet aggregation induced by ristocetin or low-dose thrombin, but not by high-dose thrombin. Binds to GPIbalpha (GP1BA). In vivo, also dose-dependently induces thrombocytopenia of mice and platelet counts remains at very low level even after 18 hours intravenous injection. The chain is Snaclec jerdonibitin subunit alpha from Protobothrops jerdonii (Jerdon's pitviper).